A 131-amino-acid chain; its full sequence is uncharacterized protein (131 aa).

This is an uncharacterized protein from Caenorhabditis elegans.